We begin with the raw amino-acid sequence, 812 residues long: Ras guanine nucleotide exchange factor J (812 aa).

Low complexity-rich tracts occupy residues 1 to 36 (MSNP…NSKS) and 53 to 65 (LLNR…NLNN). Positions 1–146 (MSNPVSINNS…GGSSGGLNMS (146 aa)) are disordered. A compositionally biased stretch (polar residues) spans 75–86 (SFTSNYQNIYTP). Low complexity predominate over residues 87–101 (NNNSYNSSNNNNNNN). Residues 131–141 (NSGGGGGGSSG) are compositionally biased toward gly residues. The LisH domain occupies 214 to 246 (GRDTMLQLILQHLQFEGLMDSRKLLEEEARVQY). The disordered stretch occupies residues 320-382 (IIYVDDKEKE…NNSIGNSNSY (63 aa)). Residues 323 to 343 (VDDKEKEKEKEKEKEKEKDKF) show a composition bias toward basic and acidic residues. The span at 344–382 (GPNSTNSLSGSGSSPNIPSGMNNNSSSIGNNSIGNSNSY) shows a compositional bias: low complexity. In terms of domain architecture, N-terminal Ras-GEF spans 409–535 (NKPQVKAASL…LSESLNAKIK (127 aa)). The 232-residue stretch at 573-804 (DEEEIARQLT…YSRSMSFEPR (232 aa)) folds into the Ras-GEF domain.

Functionally, promotes the exchange of Ras-bound GDP by GTP. This is Ras guanine nucleotide exchange factor J (gefJ) from Dictyostelium discoideum (Social amoeba).